Here is a 570-residue protein sequence, read N- to C-terminus: T-cell surface protein tactile (570 aa).

Residues 1–21 form the signal peptide; sequence MEKKWTYCAVYSIIQMHLVRG. Residues 22–504 are Extracellular-facing; sequence IVEETFGAEE…TVISKPKDGM (483 aa). The Ig-like V-type 1 domain maps to 38–125; sequence GSDVNLTCQT…YECSFTLYPE (88 aa). N-linked (GlcNAc...) asparagine glycosylation is found at Asn-42, Asn-107, Asn-148, Asn-156, Asn-166, Asn-184, Asn-261, Asn-284, Asn-334, Asn-352, Asn-374, and Asn-431. Residues Cys-45 and Cys-118 are joined by a disulfide bond. The Ig-like V-type 2 domain maps to 156–222; sequence NGTLEIPCFQ…YRLYLSPVQI (67 aa). A disulfide bridge links Cys-163 with Cys-231. The Ig-like C2-type domain occupies 253–359; sequence PEIPMIVENN…VWNSSSEKIT (107 aa). A disulfide bridge connects residues Cys-274 and Cys-339. A disordered region spans residues 373–403; the sequence is LNATESTLGTRPSLANSISPTGYRTPSSTAH. Positions 441-486 are disordered; it reads AKHSAPWMPSETNSSPSSGAGSTLPGDIFTSTTRASSEVPTTANVS. Polar residues-rich tracts occupy residues 450–461 and 469–486; these read SETNSSPSSGAG and FTST…ANVS. An N-linked (GlcNAc...) asparagine glycan is attached at Asn-484. The chain crosses the membrane as a helical span at residues 505 to 525; sequence SWPVIVAALLLSCFVLFGLGV. The Cytoplasmic portion of the chain corresponds to 526 to 570; that stretch reads RKWCQYQKEIMQRPPPFKPPPPPIKYTCIQESIGSDLPCHELETL.

In terms of assembly, homodimer; disulfide-linked. Interacts with PVR.

It is found in the membrane. In terms of biological role, may be involved in adhesive interactions of activated T and NK cells during the late phase of the immune response. Promotes NK cell-target adhesion by interacting with PVR present on target cells. May function at a time after T and NK cells have penetrated the endothelium using integrins and selectins, when they are actively engaging diseased cells and moving within areas of inflammation. The chain is T-cell surface protein tactile (CD96) from Bos taurus (Bovine).